We begin with the raw amino-acid sequence, 350 residues long: Phenylalanine--tRNA ligase alpha subunit (350 aa).

Residue glutamate 260 participates in Mg(2+) binding.

The protein belongs to the class-II aminoacyl-tRNA synthetase family. Phe-tRNA synthetase alpha subunit type 1 subfamily. In terms of assembly, tetramer of two alpha and two beta subunits. Mg(2+) serves as cofactor.

Its subcellular location is the cytoplasm. The enzyme catalyses tRNA(Phe) + L-phenylalanine + ATP = L-phenylalanyl-tRNA(Phe) + AMP + diphosphate + H(+). This chain is Phenylalanine--tRNA ligase alpha subunit, found in Mesoplasma florum (strain ATCC 33453 / NBRC 100688 / NCTC 11704 / L1) (Acholeplasma florum).